A 538-amino-acid chain; its full sequence is NAD(P)H-quinone oxidoreductase chain 4 (538 aa).

The next 14 helical transmembrane spans lie at 11-31 (FPWLSLSIFFPIVGALIVPFI), 43-63 (YALIIALITFLITVAAYFKGF), 95-115 (MPLILLTSFITSLAVLAAWPV), 119-139 (PKLFFFLILAMDGGQIAVFAV), 143-163 (LLFFLAWELELFPVYLFLAIW), 175-195 (FIIYTAGSSLFILLAGLAMGF), 217-237 (GFQLLCYSGLLIAFGVKLPIV), 251-271 (TAPVHMLLAGILLKMGGYALL), 285-305 (FAPLLIVLGVVNIIYAALTSF), 314-334 (IAYSSISHMGFVLIGIGSFSS), 340-360 (AMLQMVSHGLIGASLFFLVGA), 382-404 (IMFALWTACAFASLALPGMSGFI), 425-445 (IVVASLAAIGVILTPIYLLSM), and 472-492 (IYIIACLLVPIIGIGLYPKIM).

The protein belongs to the complex I subunit 4 family.

The protein resides in the cellular thylakoid membrane. The catalysed reaction is a plastoquinone + NADH + (n+1) H(+)(in) = a plastoquinol + NAD(+) + n H(+)(out). It catalyses the reaction a plastoquinone + NADPH + (n+1) H(+)(in) = a plastoquinol + NADP(+) + n H(+)(out). In terms of biological role, NDH-1 shuttles electrons from NAD(P)H, via FMN and iron-sulfur (Fe-S) centers, to quinones in the respiratory chain. The immediate electron acceptor for the enzyme in this species is believed to be plastoquinone. Couples the redox reaction to proton translocation (for every two electrons transferred, four hydrogen ions are translocated across the cytoplasmic membrane), and thus conserves the redox energy in a proton gradient. The sequence is that of NAD(P)H-quinone oxidoreductase chain 4 from Prochlorococcus marinus (strain NATL2A).